The following is a 158-amino-acid chain: Transcriptional repressor NrdR (158 aa).

A zinc finger spans residues 3-34; that stretch reads CPFCGNADTQVVDSRVSEEGDTIRRRRRCLSC. The region spanning 49-139 is the ATP-cone domain; the sequence is PSVVKRNGSR…VYKNFEDIGE (91 aa).

This sequence belongs to the NrdR family. The cofactor is Zn(2+).

Functionally, negatively regulates transcription of bacterial ribonucleotide reductase nrd genes and operons by binding to NrdR-boxes. This is Transcriptional repressor NrdR from Bordetella petrii (strain ATCC BAA-461 / DSM 12804 / CCUG 43448).